A 309-amino-acid polypeptide reads, in one-letter code: Homoserine kinase (309 aa).

95–105 provides a ligand contact to ATP; it reads PQSRGLGSSAA.

Belongs to the GHMP kinase family. Homoserine kinase subfamily.

Its subcellular location is the cytoplasm. The catalysed reaction is L-homoserine + ATP = O-phospho-L-homoserine + ADP + H(+). The protein operates within amino-acid biosynthesis; L-threonine biosynthesis; L-threonine from L-aspartate: step 4/5. Its function is as follows. Catalyzes the ATP-dependent phosphorylation of L-homoserine to L-homoserine phosphate. In Corynebacterium efficiens (strain DSM 44549 / YS-314 / AJ 12310 / JCM 11189 / NBRC 100395), this protein is Homoserine kinase.